Consider the following 244-residue polypeptide: Small ribosomal subunit protein uS3 (244 aa).

One can recognise a KH type-2 domain in the interval 39-107 (IRELIKKESF…KLIINVEEIK (69 aa)). The tract at residues 216–244 (LPVYKNKKNDKNKKRRNNNRKGKSQAAKN) is disordered. The segment covering 220–238 (KNKKNDKNKKRRNNNRKGK) has biased composition (basic residues).

Belongs to the universal ribosomal protein uS3 family. As to quaternary structure, part of the 30S ribosomal subunit. Forms a tight complex with proteins S10 and S14.

In terms of biological role, binds the lower part of the 30S subunit head. Binds mRNA in the 70S ribosome, positioning it for translation. The sequence is that of Small ribosomal subunit protein uS3 from Finegoldia magna (strain ATCC 29328 / DSM 20472 / WAL 2508) (Peptostreptococcus magnus).